The following is a 34-amino-acid chain: Cuticle protein 9 (34 aa).

The sequence is that of Cuticle protein 9 from Blaberus craniifer (Death's head cockroach).